We begin with the raw amino-acid sequence, 284 residues long: L-ribulose-5-phosphate 3-epimerase UlaE (284 aa).

Belongs to the L-ribulose-5-phosphate 3-epimerase family.

The catalysed reaction is L-ribulose 5-phosphate = L-xylulose 5-phosphate. Its pathway is cofactor degradation; L-ascorbate degradation; D-xylulose 5-phosphate from L-ascorbate: step 3/4. In terms of biological role, catalyzes the isomerization of L-xylulose-5-phosphate to L-ribulose-5-phosphate. Is involved in the anaerobic L-ascorbate utilization. The polypeptide is L-ribulose-5-phosphate 3-epimerase UlaE (Escherichia coli (strain K12 / MC4100 / BW2952)).